The sequence spans 198 residues: Thymidine kinase (198 aa).

Residues glycine 16–serine 23 and glutamate 89–glutamine 92 contribute to the ATP site. Glutamate 90 (proton acceptor) is an active-site residue. Residues cysteine 146, cysteine 149, cysteine 184, and cysteine 187 each contribute to the Zn(2+) site.

This sequence belongs to the thymidine kinase family. As to quaternary structure, homotetramer.

The protein localises to the cytoplasm. The enzyme catalyses thymidine + ATP = dTMP + ADP + H(+). The chain is Thymidine kinase from Dictyoglomus thermophilum (strain ATCC 35947 / DSM 3960 / H-6-12).